A 193-amino-acid chain; its full sequence is Erythropoietin (193 aa).

Residues 1 to 27 (MGVHECPAWLWLLLSLLSLPLGLPVLG) form the signal peptide. Intrachain disulfides connect C34-C188 and C56-C60. An N-linked (GlcNAc...) asparagine glycan is attached at N51. Residues N65 and N110 are each glycosylated (N-linked (GlcNAc...) asparagine). S153 carries O-linked (GalNAc...) serine glycosylation.

Belongs to the EPO/TPO family. In terms of tissue distribution, produced by kidney or liver of adult mammals and by liver of fetal or neonatal mammals.

The protein resides in the secreted. Functionally, hormone involved in the regulation of erythrocyte proliferation and differentiation and the maintenance of a physiological level of circulating erythrocyte mass. Binds to EPOR leading to EPOR dimerization and JAK2 activation thereby activating specific downstream effectors, including STAT1 and STAT3. The polypeptide is Erythropoietin (EPO) (Homo sapiens (Human)).